A 389-amino-acid polypeptide reads, in one-letter code: Alpha carbonic anhydrase 8 (389 aa).

The signal sequence occupies residues 1 to 22; it reads MKISSLGWVLVLIFISITIVSS. The interval 21–153 is disordered; sequence SSAPAPKPPK…TKGNKGPAKW (133 aa). A compositionally biased stretch (pro residues) spans 25–129; that stretch reads APKPPKPKPA…PKPKPAPKPA (105 aa). Positions 138 to 374 constitute an Alpha-carbonic anhydrase domain; the sequence is TEFSYETKGN…VNKRKVYLYK (237 aa). A disulfide bond links cysteine 163 and cysteine 324. Asparagine 196 carries N-linked (GlcNAc...) asparagine glycosylation. Histidine 204 (proton acceptor) is an active-site residue. Histidine 232, histidine 234, and histidine 251 together coordinate Zn(2+). A substrate-binding site is contributed by 320–321; it reads TA. Asparagine 385 carries N-linked (GlcNAc...) asparagine glycosylation.

This sequence belongs to the alpha-class carbonic anhydrase family. Requires Zn(2+) as cofactor. N-glycosylated.

Its subcellular location is the plastid. The protein localises to the chloroplast stroma. The enzyme catalyses hydrogencarbonate + H(+) = CO2 + H2O. In terms of biological role, reversible hydration of carbon dioxide. The protein is Alpha carbonic anhydrase 8 (ACA8) of Arabidopsis thaliana (Mouse-ear cress).